The sequence spans 470 residues: SHUGOSHIN 2 (470 aa).

Residues 72 to 113 (IQKLRINLRSVQEKNLQLAQANSQMLAELNTNRDRLKDLQHE) adopt a coiled-coil conformation. Composition is skewed to basic and acidic residues over residues 131–143 (VLPR…KDKV) and 150–162 (GDCK…DIKH). Disordered regions lie at residues 131–176 (VLPR…IKSS) and 358–470 (ESAG…RRKC). Residues 163–172 (KDTKRKRTTR) are compositionally biased toward basic residues. Positions 370-381 (SESRHETKEITR) are enriched in basic and acidic residues. The segment covering 382-392 (KRSFSTRRQST) has biased composition (basic residues). 3 stretches are compositionally biased toward basic and acidic residues: residues 396–406 (SQTDEAIKEIA), 423–438 (TESK…EGMT), and 449–462 (HAAE…EVSL).

It belongs to the shugoshin family.

In terms of biological role, dispensable for both meiotic and mitotic cell cycle progression. Required with SGO1 for full protection of centromeric cohesion during anaphase I. Required to prevent precocious release of pericentromeric cohesins during meiosis. Acts redundantly to SGO1. This chain is SHUGOSHIN 2, found in Arabidopsis thaliana (Mouse-ear cress).